The chain runs to 846 residues: Outer membrane channel protein CpnT (846 aa).

Residues 1 to 443 form an NTD region; the sequence is MAPLAVDPAA…AGVRGLKERL (443 aa). The interval 442 to 630 is disordered; sequence RLEPTTPHLE…SGSEPPGLHA (189 aa). Pro residues-rich tracts occupy residues 450–466 and 475–504; these read LEPP…PPRI and APAP…PPVD. 2 stretches are compositionally biased toward low complexity: residues 508 to 517 and 562 to 586; these read EPVAPSSASA and APAT…HSTP. A TNT region spans residues 651–846; the sequence is RLSDEAVDPQ…ELIRRGVLRQ (196 aa). Residues 751–846 enclose the TNT domain; sequence YGPQLDRIGG…ELIRRGVLRQ (96 aa). Arginine 757 is an active-site residue. Arginine 780 contacts NAD(+). Glutamine 822 is a catalytic residue.

Interacts with the immunity factor for TNT (IFT) homolog. The C-terminal domain (TNT) is probably cleaved.

Its subcellular location is the cell outer membrane. It localises to the secreted. The protein resides in the cell surface. It carries out the reaction NAD(+) + H2O = ADP-D-ribose + nicotinamide + H(+). With respect to regulation, glycohydrolase activity is completely inhibited by interaction with the immunity factor for TNT (IFT) homolog. This inhibition protects M.bovis from self-poisoning. In terms of biological role, the N-terminal domain (NTD) forms an outer membrane channel and is used for uptake of nutrients across the outer membrane. Also confers susceptibility to structurally different antibiotics and antituberculosis drugs, and to toxic immune factors such as nitric oxide (NO). The C-terminal domain (TNT) is dispensable for normal growth in macrophages. The sequence is that of Outer membrane channel protein CpnT from Mycobacterium bovis (strain BCG / Pasteur 1173P2).